We begin with the raw amino-acid sequence, 433 residues long: Glutamate-1-semialdehyde 2,1-aminomutase (433 aa).

Residue Lys-271 is modified to N6-(pyridoxal phosphate)lysine.

This sequence belongs to the class-III pyridoxal-phosphate-dependent aminotransferase family. HemL subfamily. As to quaternary structure, homodimer. Requires pyridoxal 5'-phosphate as cofactor.

It localises to the cytoplasm. The enzyme catalyses (S)-4-amino-5-oxopentanoate = 5-aminolevulinate. It functions in the pathway porphyrin-containing compound metabolism; protoporphyrin-IX biosynthesis; 5-aminolevulinate from L-glutamyl-tRNA(Glu): step 2/2. The protein operates within porphyrin-containing compound metabolism; chlorophyll biosynthesis. The protein is Glutamate-1-semialdehyde 2,1-aminomutase of Prochlorococcus marinus (strain MIT 9515).